We begin with the raw amino-acid sequence, 400 residues long: Nicotinate phosphoribosyltransferase (400 aa).

Histidine 220 carries the post-translational modification Phosphohistidine; by autocatalysis.

The protein belongs to the NAPRTase family. Post-translationally, transiently phosphorylated on a His residue during the reaction cycle. Phosphorylation strongly increases the affinity for substrates and increases the rate of nicotinate D-ribonucleotide production. Dephosphorylation regenerates the low-affinity form of the enzyme, leading to product release.

It catalyses the reaction nicotinate + 5-phospho-alpha-D-ribose 1-diphosphate + ATP + H2O = nicotinate beta-D-ribonucleotide + ADP + phosphate + diphosphate. The protein operates within cofactor biosynthesis; NAD(+) biosynthesis; nicotinate D-ribonucleotide from nicotinate: step 1/1. Functionally, catalyzes the synthesis of beta-nicotinate D-ribonucleotide from nicotinate and 5-phospho-D-ribose 1-phosphate at the expense of ATP. The sequence is that of Nicotinate phosphoribosyltransferase from Escherichia coli O45:K1 (strain S88 / ExPEC).